The primary structure comprises 418 residues: Histidine--tRNA ligase (418 aa).

Belongs to the class-II aminoacyl-tRNA synthetase family. As to quaternary structure, homodimer.

It localises to the cytoplasm. The enzyme catalyses tRNA(His) + L-histidine + ATP = L-histidyl-tRNA(His) + AMP + diphosphate + H(+). The polypeptide is Histidine--tRNA ligase (Thermoanaerobacter pseudethanolicus (strain ATCC 33223 / 39E) (Clostridium thermohydrosulfuricum)).